Consider the following 294-residue polypeptide: Glycine--tRNA ligase alpha subunit (294 aa).

Belongs to the class-II aminoacyl-tRNA synthetase family. As to quaternary structure, tetramer of two alpha and two beta subunits.

The protein localises to the cytoplasm. The catalysed reaction is tRNA(Gly) + glycine + ATP = glycyl-tRNA(Gly) + AMP + diphosphate. This is Glycine--tRNA ligase alpha subunit from Trichormus variabilis (strain ATCC 29413 / PCC 7937) (Anabaena variabilis).